The following is a 123-amino-acid chain: Small ribosomal subunit protein bS16 (123 aa).

Residues 87 to 123 (AKNNPIKAKPGKRAQERAAEKAQKAADAAAAAADAAE) are disordered. Basic and acidic residues predominate over residues 99–110 (RAQERAAEKAQK). Residues 111–123 (AADAAAAAADAAE) show a composition bias toward low complexity.

It belongs to the bacterial ribosomal protein bS16 family.

In Rhizobium etli (strain CIAT 652), this protein is Small ribosomal subunit protein bS16.